A 410-amino-acid chain; its full sequence is S-adenosylmethionine synthase (410 aa).

H21 is an ATP binding site. D23 contributes to the Mg(2+) binding site. E49 lines the K(+) pocket. Residues E62 and Q105 each coordinate L-methionine. The tract at residues 105-115 (QSQEIGAGVDQ) is flexible loop. The disordered stretch occupies residues 107-133 (QEIGAGVDQSHEVRSGENTDADDQAGA). ATP-binding positions include 180–182 (DGK), D261, 267–268 (RK), A284, and K288. D261 lines the L-methionine pocket. L-methionine is bound at residue K292.

The protein belongs to the AdoMet synthase family. Homotetramer; dimer of dimers. It depends on Mg(2+) as a cofactor. The cofactor is K(+).

It is found in the cytoplasm. It carries out the reaction L-methionine + ATP + H2O = S-adenosyl-L-methionine + phosphate + diphosphate. It participates in amino-acid biosynthesis; S-adenosyl-L-methionine biosynthesis; S-adenosyl-L-methionine from L-methionine: step 1/1. Its function is as follows. Catalyzes the formation of S-adenosylmethionine (AdoMet) from methionine and ATP. The overall synthetic reaction is composed of two sequential steps, AdoMet formation and the subsequent tripolyphosphate hydrolysis which occurs prior to release of AdoMet from the enzyme. The polypeptide is S-adenosylmethionine synthase (Corynebacterium diphtheriae (strain ATCC 700971 / NCTC 13129 / Biotype gravis)).